Consider the following 330-residue polypeptide: GRB2-related adapter protein 2 (330 aa).

One can recognise an SH3 1 domain in the interval 1-56 (MEAVAKFDFTASGEDELSFHTGDVLKILSNQEEWFKAELGSQEGYVPKNFIDIQFP). Tyrosine 45 carries the phosphotyrosine modification. Residues 58–149 (WFHEGLSRHQ…QKQIFLRDRT (92 aa)) enclose the SH2 domain. The residue at position 106 (lysine 106) is an N6-acetyllysine. The tract at residues 143–244 (IFLRDRTRED…GSLDINDGHC (102 aa)) is disordered. Residues 144 to 164 (FLRDRTREDQGHRGNSLDRRS) show a composition bias toward basic and acidic residues. Position 187 is a phosphoserine (serine 187). A compositionally biased stretch (low complexity) spans 209–222 (PAPQQLQQPPQQRY). Serine 236 is modified (phosphoserine). At threonine 262 the chain carries Phosphothreonine. The SH3 2 domain maps to 271 to 330 (GRVRWARALYDFEALEDDELGFHSGEVVEVLDSSNPSWWTGRLHNKLGLFPANYVAPMTR).

The protein belongs to the GRB2/sem-5/DRK family. In terms of assembly, interacts with phosphorylated LIME1 upon TCR activation. Interacts with phosphorylated LAT and LAX1 upon TCR activation. Interacts with SHB. Interacts with PTPN23.

It is found in the nucleus. It localises to the cytoplasm. The protein localises to the endosome. In terms of biological role, interacts with SLP-76 to regulate NF-AT activation. Binds to tyrosine-phosphorylated shc. This is GRB2-related adapter protein 2 (GRAP2) from Homo sapiens (Human).